The following is a 511-amino-acid chain: ATP synthase subunit alpha (511 aa).

Position 169–176 (169–176 (GDRKTGKT)) interacts with ATP.

It belongs to the ATPase alpha/beta chains family. As to quaternary structure, F-type ATPases have 2 components, CF(1) - the catalytic core - and CF(0) - the membrane proton channel. CF(1) has five subunits: alpha(3), beta(3), gamma(1), delta(1), epsilon(1). CF(0) has three main subunits: a(1), b(2) and c(9-12). The alpha and beta chains form an alternating ring which encloses part of the gamma chain. CF(1) is attached to CF(0) by a central stalk formed by the gamma and epsilon chains, while a peripheral stalk is formed by the delta and b chains.

Its subcellular location is the cell membrane. It catalyses the reaction ATP + H2O + 4 H(+)(in) = ADP + phosphate + 5 H(+)(out). Functionally, produces ATP from ADP in the presence of a proton gradient across the membrane. The alpha chain is a regulatory subunit. The chain is ATP synthase subunit alpha from Latilactobacillus sakei subsp. sakei (strain 23K) (Lactobacillus sakei subsp. sakei).